An 874-amino-acid chain; its full sequence is Valine--tRNA ligase (874 aa).

A 'HIGH' region motif is present at residues 51–61; it reads PNVTGVLHIGH. Residues 533 to 537 carry the 'KMSKS' region motif; sequence KMSKS. Residue Lys536 coordinates ATP. A coiled-coil region spans residues 813–873; that stretch reads LVARLKKQLE…IKQELDLLEQ (61 aa).

The protein belongs to the class-I aminoacyl-tRNA synthetase family. ValS type 1 subfamily. In terms of assembly, monomer.

It is found in the cytoplasm. It catalyses the reaction tRNA(Val) + L-valine + ATP = L-valyl-tRNA(Val) + AMP + diphosphate. In terms of biological role, catalyzes the attachment of valine to tRNA(Val). As ValRS can inadvertently accommodate and process structurally similar amino acids such as threonine, to avoid such errors, it has a 'posttransfer' editing activity that hydrolyzes mischarged Thr-tRNA(Val) in a tRNA-dependent manner. The protein is Valine--tRNA ligase of Helicobacter pylori (strain ATCC 700392 / 26695) (Campylobacter pylori).